Consider the following 408-residue polypeptide: Putative transporter AmpG 2 (408 aa).

Helical transmembrane passes span 11-31, 49-69, 84-104, 110-130, 154-174, 177-197, 224-244, 261-281, 294-311, 353-373, and 382-402; these read IFNI…YLLT, IGLF…GPLL, YCLV…TSFN, IPFV…DMLI, FRIG…IISW, VYRT…FYPL, CIVI…LSIM, VGYK…GGFL, VLIY…LYFL, IALI…ISGY, and YFFI…LYLP.

It belongs to the major facilitator superfamily.

The protein resides in the cell inner membrane. The sequence is that of Putative transporter AmpG 2 (ampG2) from Rickettsia prowazekii (strain Madrid E).